The following is a 577-amino-acid chain: Torulene dioxygenase (577 aa).

Fe(2+) contacts are provided by histidine 239, histidine 291, histidine 361, and histidine 570.

It belongs to the carotenoid oxygenase family. It depends on Fe(2+) as a cofactor.

Its subcellular location is the cytoplasm. The protein localises to the cytosol. The enzyme catalyses torulene + O2 = 4'-apo-beta-carotenal + 3-methyl-2-butenal. It participates in carotenoid biosynthesis. Its function is as follows. Torulene dioxygenase; part of the pathway that mediates the biosynthesis of neurosporaxanthin, a carboxylic apocarotenoid acting as an essential protective pigments and leading to orange pigmentation. CarT mediates the cleavage of torulene into beta-apo-4'-carotenal, the aldehyde corresponding to the acidic neurosporaxanthin. Is also active on other monocyclic synthetic substrates such as beta-apo-8'-carotenal and beta-apo-10'-carotenal to produce beta-apo-14'-carotenal and retinal(beta-apo-15'-carotenal), respectively. Neurosporaxanthin is synthesized from geranyl-geranyl pyrophosphate (GGPP) through several enzymatic activities. Phytoene synthase activity performed by the bifunctional enzyme carAR first produces phytoene from geranyl-geranyl pyrophosphate (GGPP). The phytoene dehydrogenase carB then introduces 4 desaturations to lead to lycopene which is substrate of the carotene cyclase activity of carAR that leads to the production of gamma-carotene. CarB then performs a 5th desaturation reaction to yield torulene. Torulene is the substrate of the dioxidase carT that breaks the molecule, removing five carbon atoms to yield beta-apo-4'-carotenal, whereas the aldehyde dehydrogenase carD mediates the last step by converting beta-apo-4'-carotenal into neurosporaxanthin. This Fusarium fujikuroi (Bakanae and foot rot disease fungus) protein is Torulene dioxygenase.